Reading from the N-terminus, the 268-residue chain is uncharacterized protein (268 aa).

An N-terminal signal peptide occupies residues 1–18 (MRGFLLLSLGVFSFSALA). 2 domain regions span residues 24-184 (SHDL…ELLP) and 185-268 (SPAT…NWLR). A disulfide bridge connects residues cysteine 110 and cysteine 115.

As to quaternary structure, monomer.

The protein resides in the periplasm. This is an uncharacterized protein from Pseudomonas aeruginosa (strain ATCC 15692 / DSM 22644 / CIP 104116 / JCM 14847 / LMG 12228 / 1C / PRS 101 / PAO1).